We begin with the raw amino-acid sequence, 383 residues long: tRNA(Met) cytidine acetate ligase (383 aa).

Residues 7–20 (ITEY…HRYH), Gly101, Asn150, and Arg175 contribute to the ATP site.

It belongs to the TmcAL family.

Its subcellular location is the cytoplasm. It carries out the reaction cytidine(34) in elongator tRNA(Met) + acetate + ATP = N(4)-acetylcytidine(34) in elongator tRNA(Met) + AMP + diphosphate. Functionally, catalyzes the formation of N(4)-acetylcytidine (ac(4)C) at the wobble position of elongator tRNA(Met), using acetate and ATP as substrates. First activates an acetate ion to form acetyladenylate (Ac-AMP) and then transfers the acetyl group to tRNA to form ac(4)C34. The polypeptide is tRNA(Met) cytidine acetate ligase (Lactiplantibacillus plantarum (strain ATCC BAA-793 / NCIMB 8826 / WCFS1) (Lactobacillus plantarum)).